A 594-amino-acid polypeptide reads, in one-letter code: Suppressor of hairless protein (594 aa).

The tract at residues 20-87 (ETTVVNPNGS…QQQQQHQQQM (68 aa)) is disordered. The segment covering 58–87 (QQQQQQLQVHHQQQQQQQQQQQQQQHQQQM) has biased composition (low complexity). DNA-binding regions lie at residues 131 to 141 (QKSYGNEKRFF), 239 to 244 (SKPSKK), and 266 to 271 (RLRSQT). The IPT/TIG domain occupies 429-519 (PIVNSLNLNG…YATGLTFTYT (91 aa)). 2 stretches are compositionally biased toward low complexity: residues 542 to 562 (NNNNNITSISNNNNSNNAGSP) and 569 to 580 (QQQQQQHQALPS). The tract at residues 542 to 594 (NNNNNITSISNNNNSNNAGSPAAGGGLQQQQQQHQALPSISEVQWNSHGSGLS) is disordered. The span at 582-594 (SEVQWNSHGSGLS) shows a compositional bias: polar residues.

This sequence belongs to the Su(H) family. In terms of assembly, interacts with activated cleaved Notch. Interacts with Hairless, this interaction preventing its DNA-binding activity. Interacts with insv (via BEN domain).

It localises to the nucleus. The protein localises to the cytoplasm. Transcriptional regulator that plays a central role in Notch signaling, a signaling pathway involved in cell-cell communication that regulates a broad spectrum of cell-fate determinations. Binds directly the 5'-GTGRGAR-3' DNA consensus sequence, which is present in the regulatory region of several genes. Acts as a transcriptional repressor when it is not associated with Notch proteins. When associated with some Notch protein, it acts as a transcriptional activator that activates transcription of Notch target genes. Required for transcription of Sim. Specifically binds to the immunoglobulin kappa-type J segment recombination signal sequence. Required for neurogenesis in imaginal disks. In the larval brain, might play a role as a transducer of Notch signaling during type II neuroblast development. Also functions independently of the Notch pathway, in the development of the bristle sensory organ precursor cell. This chain is Suppressor of hairless protein (Su(H)), found in Drosophila melanogaster (Fruit fly).